The following is a 113-amino-acid chain: uncharacterized protein (113 aa).

A signal peptide spans 1 to 20 (MMKKSILAFLLLTSSAAALA).

This is an uncharacterized protein from Escherichia coli (strain K12).